Consider the following 178-residue polypeptide: Ribonuclease M5 (178 aa).

Residues 10–103 (DGVIVCEGKT…NSTKIGVAEA (94 aa)) form the Toprim domain. Residues glutamate 16, aspartate 62, and aspartate 64 each coordinate Mg(2+).

It belongs to the ribonuclease M5 family. It depends on Mg(2+) as a cofactor.

The protein localises to the cytoplasm. The catalysed reaction is Endonucleolytic cleavage of RNA, removing 21 and 42 nucleotides, respectively, from the 5'- and 3'-termini of a 5S-rRNA precursor.. In terms of biological role, required for correct processing of both the 5' and 3' ends of 5S rRNA precursor. Cleaves both sides of a double-stranded region yielding mature 5S rRNA in one step. This chain is Ribonuclease M5, found in Mycoplasma pneumoniae (strain ATCC 29342 / M129 / Subtype 1) (Mycoplasmoides pneumoniae).